The chain runs to 87 residues: UPF0237 protein YjhC (87 aa).

Residues 4 to 76 (VVTVVGADKI…EALGVNIHVQ (73 aa)) form the ACT domain.

Belongs to the UPF0237 family.

This is UPF0237 protein YjhC (yjhC) from Lactococcus lactis subsp. lactis (strain IL1403) (Streptococcus lactis).